A 132-amino-acid polypeptide reads, in one-letter code: UPF0292 protein PH1700 (132 aa).

In terms of domain architecture, Toprim spans 20-100 (EGAIIVEGAR…KVDTETRREL (81 aa)). Residues E26, D69, and D71 each coordinate Mg(2+).

Belongs to the UPF0292 family. Mg(2+) serves as cofactor.

This chain is UPF0292 protein PH1700, found in Pyrococcus horikoshii (strain ATCC 700860 / DSM 12428 / JCM 9974 / NBRC 100139 / OT-3).